Here is a 453-residue protein sequence, read N- to C-terminus: Serine/threonine-protein phosphatase 2A 55 kDa regulatory subunit B delta isoform (453 aa).

WD repeat units lie at residues alanine 32 to proline 71, glutamate 97 to glutamate 138, alanine 181 to asparagine 219, and glutamate 230 to arginine 270. Serine 285 carries the phosphoserine modification. WD repeat units lie at residues glutamate 289–glutamate 327, glutamate 344–leucine 385, and aspartate 420–isoleucine 452. Tyrosine 305 carries the phosphotyrosine modification. Threonine 308 carries the phosphothreonine modification.

The protein belongs to the phosphatase 2A regulatory subunit B family. As to quaternary structure, PP2A consists of a common heterodimeric core enzyme, composed of a 36 kDa catalytic subunit (subunit C) and a 65 kDa constant regulatory subunit (PR65 or subunit A), that associates with a variety of regulatory subunits. Proteins that associate with the core dimer include three families of regulatory subunits B (the R2/B/PR55/B55, R3/B''/PR72/PR130/PR59 and R5/B'/B56 families), the 48 kDa variable regulatory subunit, viral proteins, and cell signaling molecules. Interacts with ENSA (when phosphorylated at 'Ser-67') and ARPP19 (when phosphorylated at 'Ser-62'), leading to inhibit PP2A activity. Interacts with IER5.

It localises to the cytoplasm. Functionally, substrate-recognition subunit of protein phosphatase 2A (PP2A) that plays a key role in cell cycle by controlling mitosis entry and exit. Involved in chromosome clustering during late mitosis by mediating dephosphorylation of MKI67. The activity of PP2A complexes containing PPP2R2D (PR55-delta) fluctuate during the cell cycle: the activity is high in interphase and low in mitosis. The sequence is that of Serine/threonine-protein phosphatase 2A 55 kDa regulatory subunit B delta isoform (PPP2R2D) from Homo sapiens (Human).